Consider the following 3010-residue polypeptide: Probable polyketide synthase 2 (3010 aa).

The Ketosynthase family 3 (KS3) domain maps to 9–432 (SRDVAVIGIG…GSNACLLLSE (424 aa)). Catalysis depends on for beta-ketoacyl synthase activity residues cysteine 174, histidine 313, and histidine 353. Residues 629-662 (GINPSINVGHSFGEISSACCSGMLDLETACFIVY) are acyl/malonyl transferase. Serine 639 functions as the For acyl/malonyl transferase activity in the catalytic mechanism. Positions 944-1063 (ATQLGYRNDV…ARFSVLKHNS (120 aa)) are N-terminal hotdog fold. In terms of domain architecture, PKS/mFAS DH spans 944-1235 (ATQLGYRNDV…YSSISTDIKN (292 aa)). Catalysis depends on histidine 976, which acts as the Proton acceptor; for dehydratase activity. The C-terminal hotdog fold stretch occupies residues 1080–1235 (NWTTIKRKEF…YSSISTDIKN (156 aa)). Aspartate 1146 serves as the catalytic Proton donor; for dehydratase activity. The region spanning 2482–2559 (DNELSIRDDI…QLIQAVIQAV (78 aa)) is the Carrier domain. Serine 2519 carries the post-translational modification O-(pantetheine 4'-phosphoryl)serine.

The cofactor is pantetheine 4'-phosphate.

Its function is as follows. Probable polyketide synthase. This chain is Probable polyketide synthase 2 (pks2), found in Dictyostelium discoideum (Social amoeba).